The primary structure comprises 351 residues: Hydroxymethylglutaryl-CoA synthase (351 aa).

Residue E80 is the Proton donor/acceptor of the active site. C112 serves as the catalytic Acyl-thioester intermediate. 2 residues coordinate (3S)-3-hydroxy-3-methylglutaryl-CoA: C112 and S153. Position 199 (R199) interacts with CoA. 2 residues coordinate (3S)-3-hydroxy-3-methylglutaryl-CoA: T201 and H234. H234 (proton donor/acceptor) is an active-site residue. K239 contacts CoA. (3S)-3-hydroxy-3-methylglutaryl-CoA-binding residues include R243, N266, and S296.

It belongs to the thiolase-like superfamily. Archaeal HMG-CoA synthase family. As to quaternary structure, interacts with acetoacetyl-CoA thiolase that catalyzes the precedent step in the pathway and with a DUF35 protein. The acetoacetyl-CoA thiolase/HMG-CoA synthase complex channels the intermediate via a fused CoA-binding site, which allows for efficient coupling of the endergonic thiolase reaction with the exergonic HMGCS reaction.

The catalysed reaction is acetoacetyl-CoA + acetyl-CoA + H2O = (3S)-3-hydroxy-3-methylglutaryl-CoA + CoA + H(+). Its pathway is metabolic intermediate biosynthesis; (R)-mevalonate biosynthesis; (R)-mevalonate from acetyl-CoA: step 2/3. In terms of biological role, catalyzes the condensation of acetyl-CoA with acetoacetyl-CoA to form 3-hydroxy-3-methylglutaryl-CoA (HMG-CoA). Functions in the mevalonate (MVA) pathway leading to isopentenyl diphosphate (IPP), a key precursor for the biosynthesis of isoprenoid compounds that are building blocks of archaeal membrane lipids. The sequence is that of Hydroxymethylglutaryl-CoA synthase from Thermoplasma volcanium (strain ATCC 51530 / DSM 4299 / JCM 9571 / NBRC 15438 / GSS1).